The following is a 178-amino-acid chain: Ribosome maturation factor RimM (178 aa).

In terms of domain architecture, PRC barrel spans 101–178 (ADEYYWYQLV…VMRVEWDADF (78 aa)).

The protein belongs to the RimM family. In terms of assembly, binds ribosomal protein uS19.

It is found in the cytoplasm. An accessory protein needed during the final step in the assembly of 30S ribosomal subunit, possibly for assembly of the head region. Essential for efficient processing of 16S rRNA. May be needed both before and after RbfA during the maturation of 16S rRNA. It has affinity for free ribosomal 30S subunits but not for 70S ribosomes. This chain is Ribosome maturation factor RimM, found in Pseudomonas putida (strain ATCC 700007 / DSM 6899 / JCM 31910 / BCRC 17059 / LMG 24140 / F1).